Here is an 88-residue protein sequence, read N- to C-terminus: Small ribosomal subunit protein bS16 (88 aa).

This sequence belongs to the bacterial ribosomal protein bS16 family.

The sequence is that of Small ribosomal subunit protein bS16 from Anaeromyxobacter dehalogenans (strain 2CP-1 / ATCC BAA-258).